The following is a 230-amino-acid chain: 5'-methylthioadenosine/S-adenosylhomocysteine nucleosidase (230 aa).

Glu12 (proton acceptor) is an active-site residue. Substrate contacts are provided by residues Gly78, Ile152, and 173 to 174; that span reads ME. Asp197 functions as the Proton donor in the catalytic mechanism.

Belongs to the PNP/UDP phosphorylase family. MtnN subfamily.

It carries out the reaction S-adenosyl-L-homocysteine + H2O = S-(5-deoxy-D-ribos-5-yl)-L-homocysteine + adenine. It catalyses the reaction S-methyl-5'-thioadenosine + H2O = 5-(methylsulfanyl)-D-ribose + adenine. The catalysed reaction is 5'-deoxyadenosine + H2O = 5-deoxy-D-ribose + adenine. The protein operates within amino-acid biosynthesis; L-methionine biosynthesis via salvage pathway; S-methyl-5-thio-alpha-D-ribose 1-phosphate from S-methyl-5'-thioadenosine (hydrolase route): step 1/2. Catalyzes the irreversible cleavage of the glycosidic bond in both 5'-methylthioadenosine (MTA) and S-adenosylhomocysteine (SAH/AdoHcy) to adenine and the corresponding thioribose, 5'-methylthioribose and S-ribosylhomocysteine, respectively. Also cleaves 5'-deoxyadenosine, a toxic by-product of radical S-adenosylmethionine (SAM) enzymes, into 5-deoxyribose and adenine. This is 5'-methylthioadenosine/S-adenosylhomocysteine nucleosidase from Haemophilus influenzae (strain 86-028NP).